Reading from the N-terminus, the 402-residue chain is 4-hydroxy-3-methylbut-2-enyl diphosphate reductase (402 aa).

Residue C66 participates in [4Fe-4S] cluster binding. Residue H96 coordinates (2E)-4-hydroxy-3-methylbut-2-enyl diphosphate. H96 serves as a coordination point for dimethylallyl diphosphate. An isopentenyl diphosphate-binding site is contributed by H96. C157 provides a ligand contact to [4Fe-4S] cluster. Residue H185 participates in (2E)-4-hydroxy-3-methylbut-2-enyl diphosphate binding. A dimethylallyl diphosphate-binding site is contributed by H185. Isopentenyl diphosphate is bound at residue H185. Catalysis depends on E187, which acts as the Proton donor. (2E)-4-hydroxy-3-methylbut-2-enyl diphosphate is bound at residue T250. C288 is a [4Fe-4S] cluster binding site. (2E)-4-hydroxy-3-methylbut-2-enyl diphosphate is bound by residues S317, S318, N319, and S379. S317, S318, N319, and S379 together coordinate dimethylallyl diphosphate. The isopentenyl diphosphate site is built by S317, S318, N319, and S379.

The protein belongs to the IspH family. The cofactor is [4Fe-4S] cluster.

The enzyme catalyses isopentenyl diphosphate + 2 oxidized [2Fe-2S]-[ferredoxin] + H2O = (2E)-4-hydroxy-3-methylbut-2-enyl diphosphate + 2 reduced [2Fe-2S]-[ferredoxin] + 2 H(+). It catalyses the reaction dimethylallyl diphosphate + 2 oxidized [2Fe-2S]-[ferredoxin] + H2O = (2E)-4-hydroxy-3-methylbut-2-enyl diphosphate + 2 reduced [2Fe-2S]-[ferredoxin] + 2 H(+). It functions in the pathway isoprenoid biosynthesis; dimethylallyl diphosphate biosynthesis; dimethylallyl diphosphate from (2E)-4-hydroxy-3-methylbutenyl diphosphate: step 1/1. Its pathway is isoprenoid biosynthesis; isopentenyl diphosphate biosynthesis via DXP pathway; isopentenyl diphosphate from 1-deoxy-D-xylulose 5-phosphate: step 6/6. Catalyzes the conversion of 1-hydroxy-2-methyl-2-(E)-butenyl 4-diphosphate (HMBPP) into a mixture of isopentenyl diphosphate (IPP) and dimethylallyl diphosphate (DMAPP). Acts in the terminal step of the DOXP/MEP pathway for isoprenoid precursor biosynthesis. In Nostoc sp. (strain PCC 7120 / SAG 25.82 / UTEX 2576), this protein is 4-hydroxy-3-methylbut-2-enyl diphosphate reductase.